The primary structure comprises 533 residues: Histone-arginine methyltransferase CARMER (533 aa).

One can recognise an SAM-dependent MTase PRMT-type domain in the interval 143-452 (ASQYFQFYGY…QSYDVTIDLH (310 aa)). The S-adenosyl-L-methionine site is built by Gln-156, Arg-165, Gly-189, Glu-211, Glu-240, and Thr-268. Arg-503 carries the asymmetric dimethylarginine; by autocatalysis modification.

It belongs to the class I-like SAM-binding methyltransferase superfamily. Protein arginine N-methyltransferase family. Homodimer. Post-translationally, the dimethylated protein is the major form.

It localises to the cytoplasm. Its subcellular location is the nucleus. It catalyses the reaction L-arginyl-[protein] + 2 S-adenosyl-L-methionine = N(omega),N(omega)-dimethyl-L-arginyl-[protein] + 2 S-adenosyl-L-homocysteine + 2 H(+). Functionally, methylates (mono- and asymmetric dimethylation) the guanidino nitrogens of arginyl residues in proteins. May methylate histone H3 at 'Arg-17' and activate transcription via chromatin remodeling. The sequence is that of Histone-arginine methyltransferase CARMER (Art4) from Drosophila willistoni (Fruit fly).